The primary structure comprises 105 residues: Phosphoribosyl-ATP pyrophosphatase (105 aa).

This sequence belongs to the PRA-PH family.

It is found in the cytoplasm. The catalysed reaction is 1-(5-phospho-beta-D-ribosyl)-ATP + H2O = 1-(5-phospho-beta-D-ribosyl)-5'-AMP + diphosphate + H(+). It participates in amino-acid biosynthesis; L-histidine biosynthesis; L-histidine from 5-phospho-alpha-D-ribose 1-diphosphate: step 2/9. This chain is Phosphoribosyl-ATP pyrophosphatase, found in Vesicomyosocius okutanii subsp. Calyptogena okutanii (strain HA).